The sequence spans 461 residues: Cysteine--tRNA ligase (461 aa).

Cysteine 28 is a binding site for Zn(2+). The 'HIGH' region motif lies at valine 30–histidine 40. Zn(2+)-binding residues include cysteine 209, histidine 234, and glutamate 238. The 'KMSKS' region signature appears at lysine 266–serine 270. Lysine 269 serves as a coordination point for ATP.

The protein belongs to the class-I aminoacyl-tRNA synthetase family. Monomer. The cofactor is Zn(2+).

It is found in the cytoplasm. It carries out the reaction tRNA(Cys) + L-cysteine + ATP = L-cysteinyl-tRNA(Cys) + AMP + diphosphate. The protein is Cysteine--tRNA ligase of Hamiltonella defensa subsp. Acyrthosiphon pisum (strain 5AT).